The following is a 148-amino-acid chain: Hemoglobin subunit beta-1 (148 aa).

One can recognise a Globin domain in the interval E3 to H148. Heme b is bound by residues H64 and H93.

As to quaternary structure, heterotetramer of two alpha chains and two beta chains. Red blood cells.

Functionally, involved in oxygen transport from gills to the various peripheral tissues. In Danio rerio (Zebrafish), this protein is Hemoglobin subunit beta-1 (ba1).